A 415-amino-acid chain; its full sequence is Putative competence-damage inducible protein (415 aa).

This sequence belongs to the CinA family.

This chain is Putative competence-damage inducible protein, found in Limosilactobacillus reuteri (strain DSM 20016) (Lactobacillus reuteri).